The chain runs to 501 residues: Lysine--tRNA ligase (501 aa).

Mg(2+)-binding residues include E411 and E418.

Belongs to the class-II aminoacyl-tRNA synthetase family. Homodimer. Requires Mg(2+) as cofactor.

Its subcellular location is the cytoplasm. The catalysed reaction is tRNA(Lys) + L-lysine + ATP = L-lysyl-tRNA(Lys) + AMP + diphosphate. This Clostridium perfringens (strain ATCC 13124 / DSM 756 / JCM 1290 / NCIMB 6125 / NCTC 8237 / Type A) protein is Lysine--tRNA ligase.